A 384-amino-acid chain; its full sequence is Actin-related protein 2/3 complex subunit 1 (384 aa).

WD repeat units lie at residues 61 to 99 (DHDKTITAVDISIHGRIVTCSQDRNAYVWEPLSDGTYKP), 105 to 146 (RINR…WVSK), 151 to 190 (PIKSTINCLSWHANGVLLAAGGTDGFMRVFSGFIKGLDSK), 212 to 251 (YQGSYIHDVEWRSQMERIAYVAHDGTLNVVDYQSPVQSVN), and 349 to 383 (AHENAIVELRPFAESNGQITQVSSCGLDGKIVIYT).

The protein belongs to the WD repeat ARPC1 family. As to quaternary structure, component of the Arp2/3 complex composed of ARP2, ARP3, ARC40/p41-ARC, ARC35/p34-ARC, ARC18/p21-ARC, ARC19/p20-ARC and ARC16/p16-ARC.

Its subcellular location is the cytoplasm. It localises to the cytoskeleton. The protein resides in the actin patch. In terms of biological role, functions as a component of the Arp2/3 complex which is involved in regulation of actin polymerization and together with an activating nucleation-promoting factor (NPF) mediates the formation of branched actin networks. In Saccharomyces cerevisiae (strain ATCC 204508 / S288c) (Baker's yeast), this protein is Actin-related protein 2/3 complex subunit 1 (ARC40).